Here is a 701-residue protein sequence, read N- to C-terminus: Elongation factor G (701 aa).

A tr-type G domain is found at 11–287 (TKVRNIGIMA…AVIDYLPSPL (277 aa)). Residues 20–27 (AHIDAGKT), 84–88 (DTPGH), and 138–141 (NKMD) each bind GTP.

It belongs to the TRAFAC class translation factor GTPase superfamily. Classic translation factor GTPase family. EF-G/EF-2 subfamily.

The protein resides in the cytoplasm. Catalyzes the GTP-dependent ribosomal translocation step during translation elongation. During this step, the ribosome changes from the pre-translocational (PRE) to the post-translocational (POST) state as the newly formed A-site-bound peptidyl-tRNA and P-site-bound deacylated tRNA move to the P and E sites, respectively. Catalyzes the coordinated movement of the two tRNA molecules, the mRNA and conformational changes in the ribosome. This Mycobacterium ulcerans (strain Agy99) protein is Elongation factor G.